Consider the following 242-residue polypeptide: Vacuole localized DSC protein 1 (242 aa).

2 consecutive transmembrane segments (helical) span residues 128–148 (PYGFVIMLLIREFTCPVPTAF) and 152–172 (LLLVLLDILLLFCQIVIINGS).

In terms of assembly, part of the vacuole-localized DSC E3 ligase complex composed of at least TUL1, DSC2, DSC3, UBX3, CDC48 and VLD1.

It localises to the vacuole membrane. In terms of biological role, component of the vacuole-localized DSC E3 ubiquitin ligase complex involved in the targeting of the complex to the vacuole membrane via the AP3 pathway to ubiquinate vacuolar membrane proteins. Competes with GLD1 to determine the subcellular localizations of the DSC complex. The polypeptide is Vacuole localized DSC protein 1 (Saccharomyces cerevisiae (strain ATCC 204508 / S288c) (Baker's yeast)).